The primary structure comprises 690 residues: UvrABC system protein B (690 aa).

The Helicase ATP-binding domain maps to 39–422 (EGLDDGLSFQ…EQQHAGQVVE (384 aa)). Residue 52–59 (GVTGSGKT) participates in ATP binding. A Beta-hairpin motif is present at residues 105 to 128 (YYDYYQPEAYVPSRDLFIEKDSSI). In terms of domain architecture, Helicase C-terminal spans 443–596 (QVDDLLAEIG…QIAFNLEHGI (154 aa)). Residues 640 to 675 (AREIKRLEKSMMECAKNLEFEKAAAARDDLFRLRER) enclose the UVR domain.

Belongs to the UvrB family. Forms a heterotetramer with UvrA during the search for lesions. Interacts with UvrC in an incision complex.

Its subcellular location is the cytoplasm. Functionally, the UvrABC repair system catalyzes the recognition and processing of DNA lesions. A damage recognition complex composed of 2 UvrA and 2 UvrB subunits scans DNA for abnormalities. Upon binding of the UvrA(2)B(2) complex to a putative damaged site, the DNA wraps around one UvrB monomer. DNA wrap is dependent on ATP binding by UvrB and probably causes local melting of the DNA helix, facilitating insertion of UvrB beta-hairpin between the DNA strands. Then UvrB probes one DNA strand for the presence of a lesion. If a lesion is found the UvrA subunits dissociate and the UvrB-DNA preincision complex is formed. This complex is subsequently bound by UvrC and the second UvrB is released. If no lesion is found, the DNA wraps around the other UvrB subunit that will check the other stand for damage. This Dechloromonas aromatica (strain RCB) protein is UvrABC system protein B.